Consider the following 668-residue polypeptide: Fructose-1,6-bisphosphatase class 3 (668 aa).

The protein belongs to the FBPase class 3 family. Mn(2+) serves as cofactor.

It carries out the reaction beta-D-fructose 1,6-bisphosphate + H2O = beta-D-fructose 6-phosphate + phosphate. It participates in carbohydrate biosynthesis; gluconeogenesis. The polypeptide is Fructose-1,6-bisphosphatase class 3 (Clostridium botulinum (strain 657 / Type Ba4)).